A 474-amino-acid chain; its full sequence is Glutamate--tRNA ligase 2 (474 aa).

Residues 16-26 (PSPTGFLHIGG) carry the 'HIGH' region motif. Residues 245 to 249 (KLSKR) carry the 'KMSKS' region motif. Lys-248 contacts ATP.

Belongs to the class-I aminoacyl-tRNA synthetase family. Glutamate--tRNA ligase type 1 subfamily. In terms of assembly, monomer.

Its subcellular location is the cytoplasm. The catalysed reaction is tRNA(Glu) + L-glutamate + ATP = L-glutamyl-tRNA(Glu) + AMP + diphosphate. Catalyzes the attachment of glutamate to tRNA(Glu) in a two-step reaction: glutamate is first activated by ATP to form Glu-AMP and then transferred to the acceptor end of tRNA(Glu). The polypeptide is Glutamate--tRNA ligase 2 (Rhizorhabdus wittichii (strain DSM 6014 / CCUG 31198 / JCM 15750 / NBRC 105917 / EY 4224 / RW1) (Sphingomonas wittichii)).